The primary structure comprises 488 residues: HSPB1-associated protein 1 (488 aa).

Residues 88–208 are interaction with HSPB1; it reads ETTCNYVEAT…EDTPFLYPTR (121 aa). In terms of domain architecture, JmjC spans 124 to 288; sequence WAYADYKYFV…HLARVEEAIT (165 aa). Over residues 369-379 the composition is skewed to polar residues; the sequence is QTGSQNLTTGT. Residues 369 to 415 are disordered; sequence QTGSQNLTTGTDKPEAASPFGPDLVPVAQRSEEPPSERGGIFGSDGK.

In terms of assembly, interacts with CRYAB and HSPB1. As to expression, widely expressed.

The protein localises to the cytoplasm. Functionally, may play a role in cellular stress response. This Homo sapiens (Human) protein is HSPB1-associated protein 1 (HSPBAP1).